Consider the following 554-residue polypeptide: 3-(3-hydroxy-phenyl)propionate/3-hydroxycinnamic acid hydroxylase (554 aa).

Residues 17–46 and 285–295 each bind FAD; these read QVAI…VVEK and FRIDRVLLAGD.

This sequence belongs to the PheA/TfdB FAD monooxygenase family. The cofactor is FAD.

The catalysed reaction is 3-(3-hydroxyphenyl)propanoate + NADH + O2 + H(+) = 3-(2,3-dihydroxyphenyl)propanoate + NAD(+) + H2O. It catalyses the reaction (2E)-3-(3-hydroxyphenyl)prop-2-enoate + NADH + O2 + H(+) = (2E)-3-(2,3-dihydroxyphenyl)prop-2-enoate + NAD(+) + H2O. It participates in aromatic compound metabolism; 3-phenylpropanoate degradation. Its function is as follows. Catalyzes the insertion of one atom of molecular oxygen into position 2 of the phenyl ring of 3-(3-hydroxyphenyl)propionate (3-HPP) and hydroxycinnamic acid (3HCI). The protein is 3-(3-hydroxy-phenyl)propionate/3-hydroxycinnamic acid hydroxylase of Shigella sonnei (strain Ss046).